We begin with the raw amino-acid sequence, 224 residues long: Phosphoribosylformylglycinamidine synthase subunit PurQ (224 aa).

Positions 2-224 (KFAVIQFPGS…SILNHAEVKA (223 aa)) constitute a Glutamine amidotransferase type-1 domain. Cys86 (nucleophile) is an active-site residue. Catalysis depends on residues His195 and Glu197.

In terms of assembly, part of the FGAM synthase complex composed of 1 PurL, 1 PurQ and 2 PurS subunits.

The protein resides in the cytoplasm. The catalysed reaction is N(2)-formyl-N(1)-(5-phospho-beta-D-ribosyl)glycinamide + L-glutamine + ATP + H2O = 2-formamido-N(1)-(5-O-phospho-beta-D-ribosyl)acetamidine + L-glutamate + ADP + phosphate + H(+). The enzyme catalyses L-glutamine + H2O = L-glutamate + NH4(+). It participates in purine metabolism; IMP biosynthesis via de novo pathway; 5-amino-1-(5-phospho-D-ribosyl)imidazole from N(2)-formyl-N(1)-(5-phospho-D-ribosyl)glycinamide: step 1/2. Its function is as follows. Part of the phosphoribosylformylglycinamidine synthase complex involved in the purines biosynthetic pathway. Catalyzes the ATP-dependent conversion of formylglycinamide ribonucleotide (FGAR) and glutamine to yield formylglycinamidine ribonucleotide (FGAM) and glutamate. The FGAM synthase complex is composed of three subunits. PurQ produces an ammonia molecule by converting glutamine to glutamate. PurL transfers the ammonia molecule to FGAR to form FGAM in an ATP-dependent manner. PurS interacts with PurQ and PurL and is thought to assist in the transfer of the ammonia molecule from PurQ to PurL. This is Phosphoribosylformylglycinamidine synthase subunit PurQ from Lactobacillus delbrueckii subsp. bulgaricus (strain ATCC 11842 / DSM 20081 / BCRC 10696 / JCM 1002 / NBRC 13953 / NCIMB 11778 / NCTC 12712 / WDCM 00102 / Lb 14).